Here is a 279-residue protein sequence, read N- to C-terminus: 3-methyl-2-oxobutanoate hydroxymethyltransferase (279 aa).

Residues Asp-44 and Asp-83 each coordinate Mg(2+). 3-methyl-2-oxobutanoate is bound by residues 44–45, Asp-83, and Lys-113; that span reads DS. Residue Glu-115 coordinates Mg(2+). Residue Glu-182 is the Proton acceptor of the active site.

Belongs to the PanB family. Homodecamer; pentamer of dimers. It depends on Mg(2+) as a cofactor.

The protein localises to the cytoplasm. It catalyses the reaction 3-methyl-2-oxobutanoate + (6R)-5,10-methylene-5,6,7,8-tetrahydrofolate + H2O = 2-dehydropantoate + (6S)-5,6,7,8-tetrahydrofolate. Its pathway is cofactor biosynthesis; (R)-pantothenate biosynthesis; (R)-pantoate from 3-methyl-2-oxobutanoate: step 1/2. Its function is as follows. Catalyzes the reversible reaction in which hydroxymethyl group from 5,10-methylenetetrahydrofolate is transferred onto alpha-ketoisovalerate to form ketopantoate. This chain is 3-methyl-2-oxobutanoate hydroxymethyltransferase, found in Dehalococcoides mccartyi (strain ATCC BAA-2100 / JCM 16839 / KCTC 5957 / BAV1).